A 471-amino-acid chain; its full sequence is dTDP-4-dehydro-6-deoxy-alpha-D-glucopyranose 2,3-dehydratase (471 aa).

Residues W67, 155-159 (TRSNY), S193, N238, W288, R351, 367-369 (QCT), 372-373 (NY), and 405-408 (EGGR) contribute to the dTDP-4-dehydro-6-deoxy-alpha-D-glucose site.

The protein belongs to the hexose 2,3-dehydratase family. Homodimer.

It catalyses the reaction dTDP-4-dehydro-6-deoxy-alpha-D-glucose = dTDP-3,4-didehydro-2,6-dideoxy-alpha-D-glucose + H2O. Its pathway is antibiotic biosynthesis. In terms of biological role, involved in the biosynthesis of the 2,3,6-trideoxysugar L-epivancosamine, the terminal sugar added to the aglycone scaffold of chloroeremomycin, a member of the glycopeptide antibiotics vancomycin family. Catalyzes the removal of the hydroxyl group at position C-2 of the hexose ring of dTDP-4-dehydro-6-deoxy-alpha-D-glucopyranose, and the oxidation of the hydroxyl group at position C-3 to form a carbonyl functionality. The product of the reaction, dTDP-2,6-dideoxy-D-glycero-hex-2-enos-4-ulose, is a highly unstable diketosugar, which spontaneously forms dTDP-3,4-didehydro-2,6-dideoxy-alpha-D-glucose. This Amycolatopsis orientalis (Nocardia orientalis) protein is dTDP-4-dehydro-6-deoxy-alpha-D-glucopyranose 2,3-dehydratase.